We begin with the raw amino-acid sequence, 775 residues long: BLOC-2 complex member HPS6 (775 aa).

As to quaternary structure, component of the biogenesis of lysosome-related organelles complex-2 (or BLOC2) composed of HPS3, HPS5 and HPS6. Interacts with HPS5 and HPS3. Interacts with biogenesis of lysosome-related organelles complex-1 (BLOC1). Interacts with AP-3 complex. Interacts with MNAT1. Interacts with DCTN1 and dynein intermediate chain. As to expression, ubiquitous.

The protein resides in the microsome membrane. It localises to the cytoplasm. The protein localises to the cytosol. It is found in the early endosome membrane. Its subcellular location is the lysosome membrane. Functionally, may regulate the synthesis and function of lysosomes and of highly specialized organelles, such as melanosomes and platelet dense granules. Acts as a cargo adapter for the dynein-dynactin motor complex to mediate the transport of lysosomes from the cell periphery to the perinuclear region. Facilitates retrograde lysosomal trafficking by linking the motor complex to lysosomes, and perinuclear positioning of lysosomes is crucial for the delivery of endocytic cargos to lysosomes, for lysosome maturation and functioning. The protein is BLOC-2 complex member HPS6 (HPS6) of Homo sapiens (Human).